Consider the following 68-residue polypeptide: Metallothionein (68 aa).

The a divalent metal cation site is built by cysteine 7, cysteine 9, cysteine 14, cysteine 16, cysteine 20, cysteine 22, cysteine 25, cysteine 27, cysteine 35, cysteine 39, cysteine 40, cysteine 42, cysteine 43, cysteine 47, cysteine 50, cysteine 54, cysteine 56, cysteine 64, cysteine 66, and cysteine 67.

It belongs to the metallothionein superfamily. Type 1 family.

In terms of biological role, metallothioneins have a high content of cysteine residues that bind various heavy metals. The polypeptide is Metallothionein (mt) (Scyliorhinus torazame (Cloudy catshark)).